The following is a 1052-amino-acid chain: Malignant fibrous histiocytoma-amplified sequence 1 (1052 aa).

Alanine 2 carries the post-translational modification N-acetylalanine. LRR repeat units lie at residues 64 to 85 (DIEA…LGSA), 88 to 109 (SLRV…VAEL), 112 to 133 (HLTE…VVSA), 136 to 157 (ELRK…LGAL), 159 to 180 (HLEE…LSCL), 182 to 203 (RLRT…LLQL), 205 to 226 (ALEE…ISAL), 228 to 249 (ALKI…FCEL), 251 to 272 (SLES…FSCL), 274 to 296 (RLKM…LPLA), 297 to 318 (GLEE…ISGL), 320 to 341 (RLLT…IVEL), and 343 to 364 (GLEE…FGQL). The segment at 64–364 (DIEALNLGNN…AVLPDHFGQL (301 aa)) is required for interaction with PJA2. The segment at 64–649 (DIEALNLGNN…DKLLSVAEHR (586 aa)) is required for interaction with PPP2R2A. The 247-residue stretch at 403-649 (QPAVQPRLKL…DKLLSVAEHR (247 aa)) folds into the Roc domain. At lysine 601 the chain carries N6-acetyllysine.

Interacts with RAF1. Interacts with HSPD1. Interacts with PPP2CA; retains PPP2CA into the cytoplasm and excludes it from the nucleus. Interacts with PPP2R2A; the interaction is direct. Interacts with PJA2. Ubiquitinated. Ubiquitination by PJA2 does not lead MFHAS1 to proteasomal degradation but positively regulates its function in polarization of macrophages. As to expression, ubiquitously expressed. Overexpressed in malignant fibrous histiocytomas. Expressed in red blood cells (at protein level).

The protein resides in the cytoplasm. Its function is as follows. Probable GTP-binding protein. Functions in innate immunity and more specifically the inflammatory response as a regulator of the Toll-like receptor TLR2 and TLR4 signaling pathways. Negatively regulates the part of the TLR4 signaling pathway that leads to the activation of the transcription factor AP-1. By retaining the phosphatase complex PP2A into the cytoplasm, prevents the dephosphorylation of the AP-1 subunit JUN which is required for proper activation of the transcription factor. Both inhibits and activates the TLR2-dependent signaling pathway. Positively regulates the TLR2 signaling pathway to activate specifically the downstream p38 and JNK MAP kinases and promote the polarization of macrophages toward the pro-inflammatory M1 phenotype. It may also play a role in the regulation of inflammation induced by high glucose through the PKB/AKT signaling pathway. Also involved in erythrocyte differentiation through activation of the ERK1/ERK2 signaling pathway. In Homo sapiens (Human), this protein is Malignant fibrous histiocytoma-amplified sequence 1.